The sequence spans 154 residues: Methylglyoxal synthase (154 aa).

In terms of domain architecture, MGS-like spans 6–154 (QSLPAKKNIA…KYLATRQIDI (149 aa)). Residues His19, Lys23, 45–48 (TGTT), and 65–66 (SG) each bind substrate. Asp71 functions as the Proton donor/acceptor in the catalytic mechanism. His98 is a substrate binding site.

Belongs to the methylglyoxal synthase family.

The catalysed reaction is dihydroxyacetone phosphate = methylglyoxal + phosphate. Catalyzes the formation of methylglyoxal from dihydroxyacetone phosphate. In Pseudoalteromonas translucida (strain TAC 125), this protein is Methylglyoxal synthase.